Here is a 285-residue protein sequence, read N- to C-terminus: NADPH-dependent 7-cyano-7-deazaguanine reductase (285 aa).

91–93 contacts substrate; sequence IES. 93–94 provides a ligand contact to NADPH; it reads SK. Cys191 functions as the Thioimide intermediate in the catalytic mechanism. The active-site Proton donor is Asp198. 230–231 provides a ligand contact to substrate; it reads HE. 259-260 is an NADPH binding site; it reads RG.

The protein belongs to the GTP cyclohydrolase I family. QueF type 2 subfamily. In terms of assembly, homodimer.

It localises to the cytoplasm. The enzyme catalyses 7-aminomethyl-7-carbaguanine + 2 NADP(+) = 7-cyano-7-deazaguanine + 2 NADPH + 3 H(+). It participates in tRNA modification; tRNA-queuosine biosynthesis. In terms of biological role, catalyzes the NADPH-dependent reduction of 7-cyano-7-deazaguanine (preQ0) to 7-aminomethyl-7-deazaguanine (preQ1). The protein is NADPH-dependent 7-cyano-7-deazaguanine reductase of Legionella pneumophila (strain Corby).